The sequence spans 270 residues: Nuclease PA3 (270 aa).

A divalent metal cation contacts are provided by tryptophan 1, histidine 6, histidine 15, aspartate 45, and histidine 60. 1–6 contacts substrate; that stretch reads WGALGH. Substrate contacts are provided by residues 45–51, 60–63, and 73–78; these read DEYRLTS, HFID, and NVDYER. Cystine bridges form between cysteine 72–cysteine 217 and cysteine 80–cysteine 85. Asparagine 92 is a binding site for substrate. N-linked (GlcNAc...) asparagine glycosylation occurs at asparagine 92. Residues histidine 116, aspartate 120, and histidine 126 each coordinate a divalent metal cation. The tract at residues 116–164 is substrate binding; the sequence is HFIGDMTQPLHDEAYAVGGNKINVTFDGYHDNLHSDWDTYMPQKLIGGH. Residue asparagine 138 is glycosylated (N-linked (GlcNAc...) asparagine). A divalent metal cation-binding residues include histidine 149 and aspartate 153. Asparagine 184 and asparagine 197 each carry an N-linked (GlcNAc...) asparagine glycan.

Belongs to the nuclease type I family. Zn(2+) serves as cofactor.

The protein localises to the secreted. It carries out the reaction a ribonucleoside 3'-phosphate + H2O = a ribonucleoside + phosphate. Functionally, hydrolyzes only single-stranded DNA and RNA without apparent specificity for bases. This is Nuclease PA3 from Penicillium sp.